Here is a 192-residue protein sequence, read N- to C-terminus: uncharacterized protein (192 aa).

The region spanning histidine 29–serine 160 is the Nudix hydrolase domain. The short motif at glycine 67–alanine 89 is the Nudix box element. Residues glutamate 83 and glutamate 87 each coordinate Mg(2+).

Belongs to the Nudix hydrolase family. PCD1 subfamily. It depends on Mn(2+) as a cofactor. Requires Mg(2+) as cofactor.

Probably mediates the hydrolysis of some nucleoside diphosphate derivatives. This is an uncharacterized protein from Shigella boydii serotype 4 (strain Sb227).